A 298-amino-acid chain; its full sequence is Protein FAM221A (298 aa).

A compositionally biased stretch (polar residues) spans 241-257 (SSPETLTDVGTSSQVSS). The interval 241–263 (SSPETLTDVGTSSQVSSLRRPEE) is disordered.

The protein belongs to the FAM221 family.

The chain is Protein FAM221A (FAM221A) from Homo sapiens (Human).